The following is a 327-amino-acid chain: L-lactate dehydrogenase (327 aa).

Residues Val-18, Asp-39, Lys-44, Tyr-69, and 83–84 (GA) each bind NAD(+). Substrate is bound by residues Gln-86, Arg-92, and 124 to 127 (NPVD). Residues 122-124 (AAN) and Ser-147 each bind NAD(+). 152–155 (DSAR) contributes to the substrate binding site. Positions 157 and 172 each coordinate beta-D-fructose 1,6-bisphosphate. Residue His-179 is the Proton acceptor of the active site. A Phosphotyrosine modification is found at Tyr-224. Position 233 (Thr-233) interacts with substrate.

The protein belongs to the LDH/MDH superfamily. LDH family. Homotetramer.

The protein localises to the cytoplasm. The catalysed reaction is (S)-lactate + NAD(+) = pyruvate + NADH + H(+). It functions in the pathway fermentation; pyruvate fermentation to lactate; (S)-lactate from pyruvate: step 1/1. Its activity is regulated as follows. Allosterically activated by fructose 1,6-bisphosphate (FBP). Functionally, catalyzes the conversion of lactate to pyruvate. The chain is L-lactate dehydrogenase from Streptococcus pyogenes serotype M3 (strain SSI-1).